The chain runs to 548 residues: Druantia protein DruB (548 aa).

The protein localises to the cytoplasm. Component of antiviral defense system Druantia type I, composed of DruA, DruB, DruC, DruD and DruE. Expression of Druantia in E.coli (strain MG1655) confers resistance to phage lambda, SECphi18, SECphi27 and T4. This Escherichia coli (strain UMEA 4076-1) protein is Druantia protein DruB.